Consider the following 416-residue polypeptide: Ena/VASP-like protein (416 aa).

Residues 1-112 enclose the WH1 domain; sequence MSEQSICQAR…NAMLFALNIM (112 aa). Over residues 114-129 the composition is skewed to polar residues; it reads SQEGGPSSQRQVQNGP. Disordered regions lie at residues 114–133 and 141–369; these read SQEG…SPDE and VMEQ…PAGS. The residue at position 130 (serine 130) is a Phosphoserine. The span at 141 to 157 shows a compositional bias: basic and acidic residues; it reads VMEQHQQQRQESLERRT. A compositionally biased stretch (low complexity) spans 169–180; sequence PSSAASAPVSCS. A compositionally biased stretch (pro residues) spans 181–206; the sequence is GPPPPPPPPVPPPPTGATPPPPPPLP. Residues 222-242 form an EVH2 block A region; the sequence is GLAAAIAGAKLRRVQRPEDAS. The tract at residues 222–413 is EVH2; the sequence is GLAAAIAGAK…DAIRQELSGI (192 aa). Positions 231–234 match the KLKR motif; the sequence is KLRR. Low complexity predominate over residues 242 to 253; the sequence is SGGSSPSGTSKS. Phosphoserine occurs at positions 246 and 259. The tract at residues 265 to 282 is EVH2 block B; that stretch reads GGLMEEMNKLLAKRRKAA. Positions 299-320 are enriched in polar residues; it reads EDPSTSPSPGTRAASQPPNSSE. Serine 304, serine 306, serine 329, serine 331, serine 341, serine 349, serine 354, and serine 369 each carry phosphoserine. Residues 321–331 are compositionally biased toward basic and acidic residues; the sequence is AGRKPWERSNS. Residues 342–362 form a required for interaction with ZDHHC17 region; that stretch reads RTPSVAKSPEAKSPLQSQPHS. The interval 379–413 is EVH2 block C; that stretch reads DLDRMKQEILEEVVRELHKVKEEIIDAIRQELSGI.

Belongs to the Ena/VASP family. Homotetramer. Binds to the SH3 domains of ABL1, LYN and SRC. Also binds to profilin, with preference for isoform IIa of PFN2, and the WW domain of APBB1/FE65. Binds to SEMA6A. Interacts, via the Pro-rich region, with the C-terminal SH3 domain of DNMBP. Interacts with RAPH1. Binds, via the EVH1 domain, the Pro-rich domain of Listeria monocytogenes actA. Binds, via the EVH1 domain, the Pro-rich domain of ZYX. Interacts with FYB1. Interacts with ZDHHC17. Post-translationally, phosphorylated by PKA; phosphorylation abolishes binding to SH3 domains of ABL and SRC.

The protein resides in the cytoplasm. The protein localises to the cytoskeleton. Its subcellular location is the stress fiber. It localises to the cell projection. It is found in the lamellipodium. Its function is as follows. Ena/VASP proteins are actin-associated proteins involved in a range of processes dependent on cytoskeleton remodeling and cell polarity such as axon guidance and lamellipodial and filopodial dynamics in migrating cells. EVL enhances actin nucleation and polymerization. This Homo sapiens (Human) protein is Ena/VASP-like protein (EVL).